A 419-amino-acid chain; its full sequence is uncharacterized protein (419 aa).

The 208-residue stretch at 29 to 236 (PKFQDKIRIR…KLIELELKTI (208 aa)) folds into the Obg domain. The region spanning 237–414 (CEIGLVGLPN…LVRGMTQLLQ (178 aa)) is the OBG-type G domain. GTP is bound by residues 243 to 250 (GLPNAGKS), 295 to 299 (DIPGI), and 364 to 367 (ANKA).

Belongs to the TRAFAC class OBG-HflX-like GTPase superfamily. OBG GTPase family.

It is found in the mitochondrion. This is an uncharacterized protein from Schizosaccharomyces pombe (strain 972 / ATCC 24843) (Fission yeast).